The chain runs to 889 residues: MTDNKDDKTLSVAGKKTLTLKPSGVTQGTVRQDMGRGRTKAVVVETKRTRGPLKHKDERPITPVAATPAARPAEQRPMPPQPSGRPAPQPQPHQPRQEQNRPRGGVVLNDLSAGEMEARRRALAEAQIRDAEEAKRRAEDEVRRRREEEERLAREKEEAARRAAEEAARPPVEAEKTEEKVEAASPAVGERRAETRPQPGRAAPAATPAAPDGAALRGRRGTESEEDERRRSGAGAPRGKVVRPEPAKPAPRAKGDEGRRQGKLTLTTAAVDEDGSQRGRSLSAMRRRQEKFKRSQMQETREKISREVVLPETITIQELSQRMSERAVDVIKFLMKEGQMMKPGDLIDADLAELIAGEFGHTVKRVSESDVEEGIFNISDVDDDMQSRPPIVTIMGHVDHGKTSLLDAIRHANVVAGEAGGITQHIGAYQVEQNGQKITFIDTPGHAAFTAMRARGAQATDIAVLVVAADDSVMPQTIESINHAKAAGVPIIVAINKIDKPSANPQKVRTELLQHEVFVESMGGEVLDVEVSAKNQTNLDKLLEAILLQSEILDLKANPNRTAEGTVVEAELDRGRGAVATVLVQKGTLTPGQIIVAGDQWGRVRALVNDKGEHVKAAGPSTPVEVLGLSGTPAAGDRFAVVESESRAREISEYRQRLAREKAVARQSGSRGSLEQMMTQLQTSGVKEFPLVIKGDVQGSIEAISGALDKLGTDEVRARIVHSGAGGITESDVSLAEASNAAIIGFNVRANKQARDASERAGIEIRYYNIIYDLVDDVKAAMSGLLSPERRETFLGNAEILEVFNITKVGKVAGCRVTEGKVERGVGVRLVRDNVVIHEGKLKTLKRFKDEVSEVQSGQECGMAFENYEDIRAGDTIECFRVEHVTRTL.

Positions 1-299 (MTDNKDDKTL…EKFKRSQMQE (299 aa)) are disordered. Residues 61 to 76 (ITPVAATPAARPAEQR) are compositionally biased toward low complexity. Residues 77–93 (PMPPQPSGRPAPQPQPH) show a composition bias toward pro residues. Positions 116-182 (MEARRRALAE…EAEKTEEKVE (67 aa)) are enriched in basic and acidic residues. Residues 196 to 215 (RPQPGRAAPAATPAAPDGAA) are compositionally biased toward low complexity. Residues 220 to 231 (RGTESEEDERRR) show a composition bias toward basic and acidic residues. The tr-type G domain occupies 387-554 (SRPPIVTIMG…AILLQSEILD (168 aa)). The segment at 396-403 (GHVDHGKT) is G1. 396–403 (GHVDHGKT) provides a ligand contact to GTP. Residues 421 to 425 (GITQH) form a G2 region. The segment at 442–445 (DTPG) is G3. Residues 442 to 446 (DTPGH) and 496 to 499 (NKID) contribute to the GTP site. The segment at 496–499 (NKID) is G4. The interval 532–534 (SAK) is G5.

Belongs to the TRAFAC class translation factor GTPase superfamily. Classic translation factor GTPase family. IF-2 subfamily.

Its subcellular location is the cytoplasm. Its function is as follows. One of the essential components for the initiation of protein synthesis. Protects formylmethionyl-tRNA from spontaneous hydrolysis and promotes its binding to the 30S ribosomal subunits. Also involved in the hydrolysis of GTP during the formation of the 70S ribosomal complex. The sequence is that of Translation initiation factor IF-2 from Rhizobium meliloti (strain 1021) (Ensifer meliloti).